The sequence spans 2265 residues: Collagen alpha-6(VI) chain (2265 aa).

Residues 1–18 (MLLVLCLTMICFHVCVNQ) form the signal peptide. Residues 19–1390 (DSGPEYADVV…TCCCLLCKCT (1372 aa)) form a nonhelical region region. VWFA domains lie at 26-205 (DVVF…IKDV), 228-406 (DVVF…LKKL), 435-605 (DIYL…RNQV), 621-790 (DIMF…EDDL), 808-981 (DVVF…FSDV), 999-1170 (DLVF…KKRI), and 1186-1378 (DVVV…INVA). N-linked (GlcNAc...) asparagine glycosylation is found at N197, N238, and N346. N-linked (GlcNAc...) asparagine glycosylation occurs at N760. The segment at 1391–1724 (GGDGAMGDPG…GRKGVKGARG (334 aa)) is triple-helical region. Residues 1398 to 1722 (DPGSAGKKGP…PPGRKGVKGA (325 aa)) are disordered. Residues 1455–1470 (EEGEVGEDGLDGLDGE) are compositionally biased toward acidic residues. The segment covering 1497-1507 (AAGDRGAKGLR) has biased composition (basic and acidic residues). The Cell attachment site signature appears at 1507 to 1509 (RGD). Over residues 1546–1558 (SRRKMVVHGRRGH) the composition is skewed to basic residues. A nonhelical region region spans residues 1725-2265 (LASFSTCDLI…ATSKLGKRSA (541 aa)). VWFA domains are found at residues 1756 to 1936 (ELVF…ERLQ) and 1964 to 2165 (DTAF…INSI). The disordered stretch occupies residues 2186-2205 (SRDLKPPPRQFRSFVPGPQK).

The protein belongs to the type VI collagen family. As to quaternary structure, trimers composed of three different chains: alpha-1(VI), alpha-2(VI), and alpha-3(VI) or alpha-4(VI) or alpha-5(VI) or alpha-6(VI). In terms of processing, prolines at the third position of the tripeptide repeating unit (G-X-Y) are hydroxylated in some or all of the chains. In newborn, it is expressed in lung, heart, kidney, muscle, brain, intestine, skin, femur and sternum. In adult, it is expressed in lung, heart, muscle, ovary, brain, liver and sternum.

The protein resides in the secreted. Its subcellular location is the extracellular space. The protein localises to the extracellular matrix. Functionally, collagen VI acts as a cell-binding protein. The polypeptide is Collagen alpha-6(VI) chain (Col6a6) (Mus musculus (Mouse)).